The chain runs to 413 residues: Gamma-glutamyl phosphate reductase (413 aa).

This sequence belongs to the gamma-glutamyl phosphate reductase family.

The protein localises to the cytoplasm. It catalyses the reaction L-glutamate 5-semialdehyde + phosphate + NADP(+) = L-glutamyl 5-phosphate + NADPH + H(+). Its pathway is amino-acid biosynthesis; L-proline biosynthesis; L-glutamate 5-semialdehyde from L-glutamate: step 2/2. Its function is as follows. Catalyzes the NADPH-dependent reduction of L-glutamate 5-phosphate into L-glutamate 5-semialdehyde and phosphate. The product spontaneously undergoes cyclization to form 1-pyrroline-5-carboxylate. The sequence is that of Gamma-glutamyl phosphate reductase from Caulobacter vibrioides (strain ATCC 19089 / CIP 103742 / CB 15) (Caulobacter crescentus).